The sequence spans 185 residues: NADH-quinone oxidoreductase subunit B (185 aa).

Residues C38, C39, C104, and C133 each contribute to the [4Fe-4S] cluster site. Over residues 165–176 (AAEAYREEERQA) the composition is skewed to basic and acidic residues. The interval 165 to 185 (AAEAYREEERQAARSALGPRS) is disordered.

Belongs to the complex I 20 kDa subunit family. In terms of assembly, NDH-1 is composed of 14 different subunits. Subunits NuoB, C, D, E, F, and G constitute the peripheral sector of the complex. [4Fe-4S] cluster serves as cofactor.

It localises to the cell membrane. It carries out the reaction a quinone + NADH + 5 H(+)(in) = a quinol + NAD(+) + 4 H(+)(out). Functionally, NDH-1 shuttles electrons from NADH, via FMN and iron-sulfur (Fe-S) centers, to quinones in the respiratory chain. The immediate electron acceptor for the enzyme in this species is believed to be ubiquinone. Couples the redox reaction to proton translocation (for every two electrons transferred, four hydrogen ions are translocated across the cytoplasmic membrane), and thus conserves the redox energy in a proton gradient. This Thermomicrobium roseum (strain ATCC 27502 / DSM 5159 / P-2) protein is NADH-quinone oxidoreductase subunit B.